We begin with the raw amino-acid sequence, 397 residues long: Argininosuccinate synthase (397 aa).

Position 9–17 (9–17 (AYSGGLDTS)) interacts with ATP. L-citrulline is bound at residue Tyr-87. Gly-117 is a binding site for ATP. Positions 119, 123, and 124 each coordinate L-aspartate. Asn-123 is an L-citrulline binding site. Positions 127, 175, 184, 260, and 272 each coordinate L-citrulline.

The protein belongs to the argininosuccinate synthase family. Type 1 subfamily. In terms of assembly, homotetramer.

The protein localises to the cytoplasm. The catalysed reaction is L-citrulline + L-aspartate + ATP = 2-(N(omega)-L-arginino)succinate + AMP + diphosphate + H(+). It functions in the pathway amino-acid biosynthesis; L-arginine biosynthesis; L-arginine from L-ornithine and carbamoyl phosphate: step 2/3. This Methanococcus maripaludis (strain DSM 14266 / JCM 13030 / NBRC 101832 / S2 / LL) protein is Argininosuccinate synthase.